The sequence spans 62 residues: Light-harvesting protein B-870 alpha chain (62 aa).

Position 1 is an N-formylmethionine (M1). The Cytoplasmic segment spans residues 1–12; it reads MWRIWQLFDPRQ. Residues 13–33 traverse the membrane as a helical segment; it reads ALVGLATFLFVLALLIHFILL. H29 provides a ligand contact to a bacteriochlorophyll. At 34-52 the chain is on the periplasmic side; that stretch reads STERFNWLEGASTKPVQTS. A propeptide spanning residues 53 to 62 is cleaved from the precursor; that stretch reads MVMPSSDLAV.

Belongs to the antenna complex alpha subunit family. As to quaternary structure, the core complex is formed by different alpha and beta chains, binding bacteriochlorophyll molecules, and arranged most probably in tetrameric structures disposed around the reaction center. The non-pigmented gamma chains may constitute additional components.

The protein localises to the cell inner membrane. Its function is as follows. Antenna complexes are light-harvesting systems, which transfer the excitation energy to the reaction centers. The protein is Light-harvesting protein B-870 alpha chain of Rhodospirillum rubrum.